Reading from the N-terminus, the 566-residue chain is Putative sensory transducer protein YvaQ (566 aa).

Positions 1-31 are cleaved as a signal peptide; the sequence is MRLTISRKFSLVFLTLILINLLVGGIGVLNM. A coiled-coil region spans residues 74–110; the sequence is DKSKMDTLDQEMNQIMEDINQKLDNYEKTISTDKEQK. The helical transmembrane segment at 186-206 threads the bilayer; sequence IYTALLVAASILISIFIWLYI. The region spanning 208-261 is the HAMP domain; the sequence is RNIVKPIIRMKESANHIAEGDLSNDMEALNSKDELGDLNEALQKMVGNLRDIVG. One can recognise a Methyl-accepting transducer domain in the interval 280-530; it reads ATNETRSGSK…ESAAGIEETF (251 aa). The stretch at 536-566 forms a coiled coil; the sequence is SAHSMDQVLLNAEELEQLANELNEKMGQFTI.

Belongs to the methyl-accepting chemotaxis (MCP) protein family.

The protein localises to the cell membrane. Functionally, chemotactic-signal transducers respond to changes in the concentration of attractants and repellents in the environment, transduce a signal from the outside to the inside of the cell, and facilitate sensory adaptation through the variation of the level of methylation. Attractants increase the level of methylation while repellents decrease the level of methylation. In Bacillus subtilis (strain 168), this protein is Putative sensory transducer protein YvaQ (yvaQ).